The sequence spans 413 residues: Eukaryotic initiation factor 4A-9 (413 aa).

The Q motif signature appears at 40–68 (HSFDAMGLKENLLRGIYAYGFEKPSAIQQ). The Helicase ATP-binding domain maps to 71-241 (IVPFCKGLDV…RKFMNKPVRI (171 aa)). 84-91 (AQSGTGKT) contacts ATP. A DEAD box motif is present at residues 189–192 (DEAD). In terms of domain architecture, Helicase C-terminal spans 252-413 (GIKQFYVNVD…ELPANVADLL (162 aa)).

The protein belongs to the DEAD box helicase family. eIF4A subfamily. In terms of assembly, eIF4F is a multi-subunit complex, the composition of which varies with external and internal environmental conditions. It is composed of at least EIF4A, EIF4E and EIF4G.

The catalysed reaction is ATP + H2O = ADP + phosphate + H(+). Functionally, ATP-dependent RNA helicase which is a subunit of the eIF4F complex involved in cap recognition and is required for mRNA binding to ribosome. In the current model of translation initiation, eIF4A unwinds RNA secondary structures in the 5'-UTR of mRNAs which is necessary to allow efficient binding of the small ribosomal subunit, and subsequent scanning for the initiator codon. The sequence is that of Eukaryotic initiation factor 4A-9 from Nicotiana tabacum (Common tobacco).